Here is a 302-residue protein sequence, read N- to C-terminus: Coenzyme PQQ synthesis protein B (302 aa).

The protein belongs to the PqqB family.

Its pathway is cofactor biosynthesis; pyrroloquinoline quinone biosynthesis. In terms of biological role, may be involved in the transport of PQQ or its precursor to the periplasm. The sequence is that of Coenzyme PQQ synthesis protein B from Azotobacter vinelandii (strain DJ / ATCC BAA-1303).